Reading from the N-terminus, the 445-residue chain is Cytochrome b (445 aa).

Residues 2–49 (SGIPHDHYEPRTGIEKWLHSRLPIVALAYDTIMIPTPRNLNWMWIWGV) lie on the Cytoplasmic side of the membrane. A helical membrane pass occupies residues 50–67 (VLAFCLVLQIVTGIVLAM). The Periplasmic segment spans residues 68 to 94 (HYTPHVDLAFASVEHIMRNVNGGFMLR). The helical transmembrane segment at 95-113 (YLHANGASLFFIAVYLHIF) threads the bilayer. The heme b site is built by histidine 97 and histidine 111. The Cytoplasmic segment spans residues 114–129 (RGLYYGSYKAPREVTW). A helical transmembrane segment spans residues 130-149 (IVGMLIYLAMMATAFMGYVL). The Periplasmic segment spans residues 150–193 (PWGQMSFWGATVITGLFGAIPGIGHSIQTWLLGGPAVDNATLNR). The chain crosses the membrane as a helical span at residues 194 to 216 (FFSLHYLLPFVIAALVAIHIWAF). Heme b-binding residues include histidine 198 and histidine 212. Residues 217-252 (HSTGNNNPTGVEVRRTSKAEAQKDTVPFWPYFIIKD) lie on the Cytoplasmic side of the membrane. The chain crosses the membrane as a helical span at residues 253–270 (VFALAVVLLVFFAIVGFM). Topologically, residues 271 to 329 (PNYLGHPDNYIEANPLSTPAHIVPEWYFLPFYAILRAFTADVWVVQIANFISFGIIDAK) are periplasmic. Residues 330-346 (FFGVLAMFGAILVMALV) form a helical membrane-spanning segment. At 347-364 (PWLDTSPVRSGRYRPMFK) the chain is on the cytoplasmic side. Residues 365-382 (IYFWLLAADFVILTWVGA) traverse the membrane as a helical segment. Over 383 to 388 (QQTTFP) the chain is Periplasmic. A helical membrane pass occupies residues 389–408 (YDWISLIASAYWFAYFLVIL). The Cytoplasmic portion of the chain corresponds to 409–445 (PILGAIEKPVAPPATIEEDFNAHYSPATGGTKTVVAE).

The protein belongs to the cytochrome b family. The main subunits of complex b-c1 are: cytochrome b, cytochrome c1 and the Rieske protein. Requires heme b as cofactor.

It localises to the cell membrane. Its function is as follows. Component of the ubiquinol-cytochrome c reductase complex (complex III or cytochrome b-c1 complex), which is a respiratory chain that generates an electrochemical potential coupled to ATP synthesis. The chain is Cytochrome b (petB) from Cereibacter sphaeroides (Rhodobacter sphaeroides).